The following is a 629-amino-acid chain: tRNA uridine 5-carboxymethylaminomethyl modification enzyme MnmG (629 aa).

FAD is bound by residues 14–19 (GAGHAG), V126, and S181. 273-287 (GPRYCPSIEDKVVRF) contacts NAD(+). FAD is bound at residue Q370.

This sequence belongs to the MnmG family. In terms of assembly, homodimer. Heterotetramer of two MnmE and two MnmG subunits. Requires FAD as cofactor.

The protein localises to the cytoplasm. Functionally, NAD-binding protein involved in the addition of a carboxymethylaminomethyl (cmnm) group at the wobble position (U34) of certain tRNAs, forming tRNA-cmnm(5)s(2)U34. This Bacillus mycoides (strain KBAB4) (Bacillus weihenstephanensis) protein is tRNA uridine 5-carboxymethylaminomethyl modification enzyme MnmG.